The primary structure comprises 1729 residues: RNA-directed RNA polymerase (1729 aa).

Residues 59-232 (HPMSLAVHPH…FHEPWQLYWL (174 aa)) enclose the Alphavirus-like MT domain. Disordered regions lie at residues 528 to 619 (NSNA…TPSP) and 635 to 663 (STSR…TLGR). Composition is skewed to polar residues over residues 538-567 (QQDQ…TNSV) and 586-617 (FPTT…SVTP). The span at 635–652 (STSRASSPSPRRTVVSPR) shows a compositional bias: low complexity. Residues 741–834 (SYDHCLIQRY…RVSITFRNKT (94 aa)) form the Fe2OG dioxygenase domain. Fe cation is bound by residues H759, D761, and H816. R825 lines the 2-oxoglutarate pocket. The tract at residues 841 to 862 (SAPDMNPVEQPGASAGQLTGPL) is disordered. Residues 957 to 1111 (LQNADLTWKT…VFKQYCGYYI (155 aa)) enclose the (+)RNA virus helicase ATP-binding domain. A (+)RNA virus helicase C-terminal domain is found at 1112 to 1247 (NCTHRNKQDL…VITERAAAET (136 aa)). A RdRp catalytic domain is found at 1492–1599 (RPAFASDFEA…DQVPVEKTGF (108 aa)).

The protein belongs to the potexvirus/carlavirus RNA replication protein family. Requires Fe(2+) as cofactor.

It catalyses the reaction RNA(n) + a ribonucleoside 5'-triphosphate = RNA(n+1) + diphosphate. It carries out the reaction ATP + H2O = ADP + phosphate + H(+). In terms of biological role, RNA replication. The central part of this protein possibly functions as an ATP-binding helicase. The chain is RNA-directed RNA polymerase (ORF1) from Lolium latent virus (isolate Lolium/USA/US1/-) (LoLV).